We begin with the raw amino-acid sequence, 203 residues long: Membrane-spanning 4-domains subfamily A member 13 (203 aa).

A run of 4 helical transmembrane segments spans residues V15–L35, M56–A76, I84–L104, and F141–V161.

It belongs to the MS4A family.

The protein localises to the membrane. In terms of biological role, may be involved in signal transduction as a component of a multimeric receptor complex. The protein is Membrane-spanning 4-domains subfamily A member 13 (Ms4a13) of Mus musculus (Mouse).